A 506-amino-acid chain; its full sequence is ATP synthase subunit alpha (506 aa).

An ATP-binding site is contributed by 170–177; the sequence is GDRQTGKT.

Belongs to the ATPase alpha/beta chains family. As to quaternary structure, F-type ATPases have 2 components, CF(1) - the catalytic core - and CF(0) - the membrane proton channel. CF(1) has five subunits: alpha(3), beta(3), gamma(1), delta(1), epsilon(1). CF(0) has four main subunits: a(1), b(1), b'(1) and c(9-12).

It localises to the cellular thylakoid membrane. It catalyses the reaction ATP + H2O + 4 H(+)(in) = ADP + phosphate + 5 H(+)(out). Functionally, produces ATP from ADP in the presence of a proton gradient across the membrane. The alpha chain is a regulatory subunit. This is ATP synthase subunit alpha from Parasynechococcus marenigrum (strain WH8102).